The primary structure comprises 398 residues: Secreted aspartic protease 2 (398 aa).

Positions 1–18 (MFLKNIFIALAIALLVDA) are cleaved as a signal peptide. The propeptide at 19–56 (TPTTTKRSAGFVALDFSVVKTPKAFPVTNGQEGKTSKR) is activation peptide. The region spanning 70–384 (YAADITVGSN…DLDDNEISLA (315 aa)) is the Peptidase A1 domain. Residue aspartate 88 is part of the active site. 88–90 (DTG) contacts pepstatin A. Residues cysteine 103 and cysteine 115 are joined by a disulfide bond. Pepstatin A is bound at residue 141-142 (GD). Zn(2+)-binding residues include aspartate 247 and aspartate 270. Residue aspartate 274 is part of the active site. A pepstatin A-binding site is contributed by 274–278 (DSGTT). Residues cysteine 312 and cysteine 350 are joined by a disulfide bond. Residues asparagine 313 and asparagine 321 are each glycosylated (N-linked (GlcNAc...) asparagine).

The protein belongs to the peptidase A1 family. As to quaternary structure, monomer.

Its subcellular location is the secreted. It carries out the reaction Preferential cleavage at the carboxyl of hydrophobic amino acids, but fails to cleave 15-Leu-|-Tyr-16, 16-Tyr-|-Leu-17 and 24-Phe-|-Phe-25 of insulin B chain. Activates trypsinogen, and degrades keratin.. Its function is as follows. Secreted aspartic peptidases (SAPs) are a group of ten acidic hydrolases considered as key virulence factors. These enzymes supply the fungus with nutrient amino acids as well as are able to degrade the selected host's proteins involved in the immune defense. Induces host inflammatory cytokine production in a proteolytic activity-independent way. Plays a role in tissue damage during superficial infection. Moreover, acts toward human hemoglobin though limited proteolysis to generate a variety of antimicrobial hemocidins, enabling to compete with the other microorganisms of the same physiological niche using the microbicidal peptides generated from the host protein. In terms of biological role, plays a key role in defense against host by cleaving histatin-5 (Hst 5), a peptide from human saliva that carries out fungicidal activity. The cleavage rate decreases in an order of SAP2 &gt; SAP9 &gt; SAP3 &gt; SAP7 &gt; SAP4 &gt; SAP1 &gt; SAP8. The first cleavage occurs between residues 'Lys-17' and 'His-18' of Hst 5, giving DSHAKRHHGYKRKFHEK and HHSHRGY peptides. Simultaneously, the DSHAKRHHGYKRK peptide is also formed. Further fragmentation by SAP2 results in FHEK and DSHAKRHHGY products. This Candida albicans (Yeast) protein is Secreted aspartic protease 2.